A 498-amino-acid chain; its full sequence is Hexokinase-1 (498 aa).

Residues 39 to 492 (AAAQRVVAEL…SGLGAALVAA (454 aa)) form the Hexokinase domain. Residues 95–233 (TGGEEGSYYA…GLDMRVSALI (139 aa)) are hexokinase small subdomain. 3 residues coordinate ADP: glycine 109, threonine 110, and asparagine 111. 4 residues coordinate D-glucose: threonine 199, lysine 200, asparagine 234, and aspartate 235. The interval 234-481 (NDTVGTLAAG…ERVVVKLASD (248 aa)) is hexokinase large subdomain. Threonine 258 serves as a coordination point for ADP. Residues asparagine 261, glutamate 290, and glutamate 321 each contribute to the D-glucose site. Glycine 446 is an ADP binding site.

Belongs to the hexokinase family. As to expression, highly expressed in senescent leaves.

It carries out the reaction a D-hexose + ATP = a D-hexose 6-phosphate + ADP + H(+). The catalysed reaction is D-fructose + ATP = D-fructose 6-phosphate + ADP + H(+). The enzyme catalyses D-glucose + ATP = D-glucose 6-phosphate + ADP + H(+). It participates in carbohydrate metabolism; hexose metabolism. The protein operates within carbohydrate degradation; glycolysis; D-glyceraldehyde 3-phosphate and glycerone phosphate from D-glucose: step 1/4. Functionally, fructose and glucose phosphorylating enzyme. Acts as a positive regulator of leaf senescence by mediating glucose accumulation and inducing an increase in reactive oxygen species (ROS). This Oryza sativa subsp. japonica (Rice) protein is Hexokinase-1 (HXK1).